We begin with the raw amino-acid sequence, 196 residues long: Small ribosomal subunit protein uS4c (196 aa).

The segment at 15–43 (LGALPGLTRKTPKSGSNQKKKFHSGKKEQ) is disordered. The S4 RNA-binding domain maps to 89–150 (MRLDNILFRL…NQRSKRLVQN (62 aa)).

Belongs to the universal ribosomal protein uS4 family. Part of the 30S ribosomal subunit. Contacts protein S5. The interaction surface between S4 and S5 is involved in control of translational fidelity.

Its subcellular location is the plastid. It localises to the chloroplast. One of the primary rRNA binding proteins, it binds directly to 16S rRNA where it nucleates assembly of the body of the 30S subunit. In terms of biological role, with S5 and S12 plays an important role in translational accuracy. In Bothriochloa ischaemum (Yellow bluestem), this protein is Small ribosomal subunit protein uS4c (rps4).